The chain runs to 196 residues: Regulator of G-protein signaling 8 (196 aa).

Serine 26 carries the phosphoserine modification. Residues 72–188 form the RGS domain; that stretch reads SFDVLLSHKY…LRSKMYLDLL (117 aa).

Interacts with GNAO1 and GNAI3.

It localises to the cell membrane. The protein localises to the membrane. It is found in the perikaryon. Its subcellular location is the cell projection. The protein resides in the dendrite. It localises to the nucleus. Regulates G protein-coupled receptor signaling cascades, including signaling via muscarinic acetylcholine receptor CHRM2 and dopamine receptor DRD2. Inhibits signal transduction by increasing the GTPase activity of G protein alpha subunits, thereby driving them into their inactive GDP-bound form. Modulates the activity of potassium channels that are activated in response to DRD2 and CHRM2 signaling. This chain is Regulator of G-protein signaling 8 (RGS8), found in Macaca fascicularis (Crab-eating macaque).